A 515-amino-acid chain; its full sequence is Cytochrome P450 2D7 (515 aa).

At 1 to 2 (MG) the chain is on the extracellular side. The helical transmembrane segment at 3 to 23 (LEALVPLAMIVAIFLLLVDLM) threads the bilayer. The Cytoplasmic segment spans residues 24 to 301 (HRHQRWAARY…DENLRIVVGN (278 aa)). The helical transmembrane segment at 302-322 (LFLAGMVTTSTTLAWGLLLMI) threads the bilayer. Over 323 to 515 (LHLDVQRGRR…SPYELCAVPR (193 aa)) the chain is Extracellular. The N-linked (GlcNAc...) asparagine glycan is linked to N416. C461 contributes to the heme binding site.

This sequence belongs to the cytochrome P450 family. Requires heme as cofactor. In terms of tissue distribution, expressed in brain cortex (at protein level).

It is found in the membrane. The protein resides in the cytoplasm. It localises to the mitochondrion. The enzyme catalyses an organic molecule + reduced [NADPH--hemoprotein reductase] + O2 = an alcohol + oxidized [NADPH--hemoprotein reductase] + H2O + H(+). Its function is as follows. May be responsible for the metabolism of many drugs and environmental chemicals that it oxidizes. It may be involved in the metabolism of codeine to morphine. However, another study could not confirm it. The sequence is that of Cytochrome P450 2D7 from Homo sapiens (Human).